Here is a 1675-residue protein sequence, read N- to C-terminus: Clathrin heavy chain 1 (1675 aa).

The residue at position 2 (Ala-2) is an N-acetylalanine. The interval 2-479 is globular terminal domain; sequence AQILPIRFQE…VDPTLALSVY (478 aa). WD40-like repeat stretches follow at residues 24-67, 68-107, 108-149, 150-195, 196-257, 258-301, and 302-330; these read NIGF…RPIS, ADSA…MTDD, VTFW…SSLA, GCQI…QPIE, GHAA…PEAQ, NDFP…ISGE, and TIFV…VCVE. Ser-67 is modified (phosphoserine). Thr-105 bears the Phosphothreonine mark. Position 184 is a phosphotyrosine (Tyr-184). Thr-394 carries the post-translational modification Phosphothreonine. Residues 449–465 form a binding site for the uncoating ATPase, involved in lattice disassembly region; the sequence is EKWLKEDKLECSEELGD. The flexible linker stretch occupies residues 480–523; that stretch reads LRANVPNKVIQCFAETGQVQKIVLYAKKVGYTPDWIFLLRNVMR. A distal segment region spans residues 524-634; it reads ISPDQGQQFA…RALEHFTDLY (111 aa). The tract at residues 524–1675 is heavy chain arm; that stretch reads ISPDQGQQFA…QPQPGFGYSM (1152 aa). 7 CHCR repeats span residues 537–683, 686–828, 833–972, 979–1124, 1128–1269, 1274–1420, and 1423–1566; these read VQDE…QICV, ASKY…SEDV, ILVV…PLID, LSET…VKEA, YIKA…FRLA, LHIV…LLLN, and LMVL…RECF. Tyr-634 is modified (phosphotyrosine). Residues 639 to 1675 are proximal segment; the sequence is AVVHTHLLNP…QPQPGFGYSM (1037 aa). N6-succinyllysine is present on Lys-737. Lys-856 carries the post-translational modification N6-acetyllysine. Tyr-899 carries the phosphotyrosine modification. Ser-1167 is modified (phosphoserine). Tyr-1206 carries the phosphotyrosine modification. Positions 1213–1522 are involved in binding clathrin light chain; it reads AAKLLYNNVS…YLFKGNNRWK (310 aa). Ser-1229 carries the phosphoserine modification. N6-acetyllysine; alternate is present on Lys-1441. Lys-1441 bears the N6-succinyllysine; alternate mark. Phosphotyrosine occurs at positions 1477 and 1487. The residue at position 1494 (Ser-1494) is a Phosphoserine. Lys-1501 carries the post-translational modification N6-acetyllysine. Positions 1550-1675 are trimerization; sequence AEELLQWFLQ…QPQPGFGYSM (126 aa).

The protein belongs to the clathrin heavy chain family. As to quaternary structure, clathrin triskelions, composed of 3 heavy chains and 3 light chains, are the basic subunits of the clathrin coat. In the presence of light chains, hub assembly is influenced by both the pH and the concentration of calcium. Interacts with HIP1. Interacts with DENND1A, DENND1B and DENND1C. Interacts with OCRL. Interacts with ERBB2. Interacts with FKBP6. Interacts with CKAP5 and TACC3 forming the TACC3/ch-TOG/clathrin complex located at spindle inter-microtubules bridges; the complex implicates clathrin triskelions; TACC3 and CLTC are proposed to form a composite microtubule interaction surface. Interacts with ATG16L1 (via N-terminus). Interacts with RFTN1; the interaction occurs in response to pathogens. Interacts with TMEM106B (via N-terminus). Interacts with DNAJC6; this interaction produces a local change in heavy-chain contacts, creating a detectable global distortion of the clathrin coat and leads to the recruitment of HSPA8.

Its subcellular location is the cytoplasmic vesicle membrane. The protein localises to the membrane. The protein resides in the coated pit. It localises to the melanosome. It is found in the cytoplasm. Its subcellular location is the cytoskeleton. The protein localises to the spindle. Clathrin is the major protein of the polyhedral coat of coated pits and vesicles. Two different adapter protein complexes link the clathrin lattice either to the plasma membrane or to the trans-Golgi network. Acts as a component of the TACC3/ch-TOG/clathrin complex proposed to contribute to stabilization of kinetochore fibers of the mitotic spindle by acting as inter-microtubule bridge. The TACC3/ch-TOG/clathrin complex is required for the maintenance of kinetochore fiber tension. Plays a role in early autophagosome formation. Interaction with DNAJC6 mediates the recruitment of HSPA8 to the clathrin lattice and creates local destabilization of the lattice promoting uncoating. This is Clathrin heavy chain 1 from Bos taurus (Bovine).